The sequence spans 1025 residues: Dihydropyrimidine dehydrogenase [NADP(+)] (1025 aa).

One can recognise a 4Fe-4S ferredoxin-type 1 domain in the interval 69–100 (ERGALREAVRCLKCADAPCQKSCPTSLDIKSF). [4Fe-4S] cluster-binding residues include Cys-79, Cys-82, Cys-87, and Cys-91. Val-129 is a binding site for FAD. The [4Fe-4S] cluster site is built by Cys-130, Cys-136, Cys-140, and Gln-156. FAD contacts are provided by residues 194–198 (GAGPA), 218–226 (EKQEYVGGL), and Arg-235. NADP(+) contacts are provided by residues 340-343 (AGDT), 364-365 (RK), and Arg-371. At Lys-384 the chain carries N6-acetyllysine. NADP(+) is bound by residues 437–439 (PFG) and 481–487 (DVVGMAN). Residue 480-489 (GDVVGMANTT) coordinates FAD. FMN-binding positions include Ser-550 and 574-575 (KT). Residues Asn-609 and 668-670 (NLS) contribute to the substrate site. Cys-671 serves as the catalytic Proton acceptor. Lys-709 is an FMN binding site. 736–737 (NT) contacts substrate. Residues Gly-767, 793 to 795 (TGG), and 816 to 817 (CS) contribute to the FMN site. Ser-905 carries the post-translational modification Phosphoserine. 4Fe-4S ferredoxin-type domains are found at residues 944-976 (VVALIDEEMCINCGKCYMTCNDSGYQAIQFDPE) and 978-1007 (HLPTVSDTCTGCTLCLSVCPIMDCIRMVSR). Residues Cys-953, Cys-956, Cys-959, Cys-963, Cys-986, Cys-989, Cys-992, and Cys-996 each contribute to the [4Fe-4S] cluster site.

This sequence belongs to the dihydropyrimidine dehydrogenase family. Homodimer. The cofactor is FAD. FMN serves as cofactor. Requires [4Fe-4S] cluster as cofactor.

Its subcellular location is the cytoplasm. The enzyme catalyses 5,6-dihydrouracil + NADP(+) = uracil + NADPH + H(+). The catalysed reaction is 5,6-dihydrothymine + NADP(+) = thymine + NADPH + H(+). It functions in the pathway amino-acid biosynthesis; beta-alanine biosynthesis. With respect to regulation, inactivated by 5-iodouracil. Functionally, involved in pyrimidine base degradation. Catalyzes the reduction of uracil and thymine. Also involved the degradation of the chemotherapeutic drug 5-fluorouracil. The protein is Dihydropyrimidine dehydrogenase [NADP(+)] of Rattus norvegicus (Rat).